Reading from the N-terminus, the 356-residue chain is Alternative oxidase, mitochondrial (356 aa).

The chain crosses the membrane as a helical span at residues 152–172 (VIRFIFLETVAGVPGMVGGML). 3 residues coordinate Fe cation: Glu-159, Glu-198, and His-201. Residues 217–237 (LMVLGAQGVFFNGFFISYLIS) form a helical membrane-spanning segment. Fe cation-binding residues include Glu-249, Glu-304, and His-307. A disordered region spans residues 330 to 356 (YDNPEAPHPTKSAEIVKPTGWERDEVI).

This sequence belongs to the alternative oxidase family. It depends on Fe cation as a cofactor.

Its subcellular location is the mitochondrion inner membrane. Its function is as follows. Catalyzes cyanide-resistant oxygen consumption. May increase respiration when the cytochrome respiratory pathway is restricted, or in response to low temperatures. The polypeptide is Alternative oxidase, mitochondrial (AOX1) (Ajellomyces capsulatus (Darling's disease fungus)).